A 552-amino-acid polypeptide reads, in one-letter code: Eukaryotic translation initiation factor 3 subunit D (552 aa).

The RNA gate stretch occupies residues 288–302; that stretch reads DFDLLTVSETANEPP. A disordered region spans residues 525 to 552; it reads LPDGTFSSDEDEEEDDEDEEDEEEDEDN. Acidic residues predominate over residues 532–552; it reads SDEDEEEDDEDEEDEEEDEDN.

This sequence belongs to the eIF-3 subunit D family. Component of the eukaryotic translation initiation factor 3 (eIF-3) complex, which is composed of 13 subunits: eif3a, eif3b, eif3c, eif3d, eif3e, eif3f, eif3g, eif3h, eif3i, eif3j, eif3k, eif3l and eif3m.

The protein resides in the cytoplasm. In terms of biological role, mRNA cap-binding component of the eukaryotic translation initiation factor 3 (eIF-3) complex, which is involved in protein synthesis of a specialized repertoire of mRNAs and, together with other initiation factors, stimulates binding of mRNA and methionyl-tRNAi to the 40S ribosome. The eIF-3 complex specifically targets and initiates translation of a subset of mRNAs involved in cell proliferation. In the eIF-3 complex, eif3d specifically recognizes and binds the 7-methylguanosine cap of a subset of mRNAs. The protein is Eukaryotic translation initiation factor 3 subunit D (eif3d) of Danio rerio (Zebrafish).